A 414-amino-acid polypeptide reads, in one-letter code: xyloglucan O-acetyltransferase 2 (414 aa).

The Cytoplasmic portion of the chain corresponds to 1-26; sequence MKSSSSIFRETSEKKSERWMMMNIGR. A helical; Signal-anchor for type II membrane protein transmembrane segment spans residues 27–47; it reads FSPFFLSSFCITLFFTGFFVY. Residues 48-414 are Lumenal-facing; it reads QNPFKSIADQ…FLMAIIRQLR (367 aa). Intrachain disulfides connect cysteine 70-cysteine 120, cysteine 91-cysteine 156, cysteine 100-cysteine 394, and cysteine 317-cysteine 390. N-linked (GlcNAc...) asparagine glycosylation is present at asparagine 88. Residues 143–145 carry the GDS motif motif; the sequence is GDS. Serine 145 acts as the Nucleophile in catalysis. 3 N-linked (GlcNAc...) asparagine glycosylation sites follow: asparagine 205, asparagine 263, and asparagine 308. Aspartate 389 functions as the Proton donor in the catalytic mechanism. The DXXH motif motif lies at 389–392; sequence DCVH. Residue histidine 392 is the Proton acceptor of the active site.

Belongs to the PC-esterase family. TBL subfamily.

It localises to the membrane. Xyloglucan acetyltransferase that catalyzes the acetylation of fucosylated Gal residues on xyloglucan side chains. Predominantly catalyze 6-O-monoacetylation of Gal residues in the Fuc-Gal-Xyl trisaccharide side chains of xyloglucan oligomers. Involved in xyloglucan specific O-acetylation in seeds. This is xyloglucan O-acetyltransferase 2 from Arabidopsis thaliana (Mouse-ear cress).